The chain runs to 130 residues: S-adenosylmethionine decarboxylase proenzyme (130 aa).

Ser-64 functions as the Schiff-base intermediate with substrate; via pyruvic acid in the catalytic mechanism. Ser-64 is modified (pyruvic acid (Ser); by autocatalysis). Catalysis depends on His-69, which acts as the Proton acceptor; for processing activity. Cys-84 serves as the catalytic Proton donor; for catalytic activity.

It belongs to the prokaryotic AdoMetDC family. Type 1 subfamily. In terms of assembly, heterotetramer of two alpha and two beta chains arranged as a dimer of alpha/beta heterodimers. Requires pyruvate as cofactor. Is synthesized initially as an inactive proenzyme. Formation of the active enzyme involves a self-maturation process in which the active site pyruvoyl group is generated from an internal serine residue via an autocatalytic post-translational modification. Two non-identical subunits are generated from the proenzyme in this reaction, and the pyruvate is formed at the N-terminus of the alpha chain, which is derived from the carboxyl end of the proenzyme. The post-translation cleavage follows an unusual pathway, termed non-hydrolytic serinolysis, in which the side chain hydroxyl group of the serine supplies its oxygen atom to form the C-terminus of the beta chain, while the remainder of the serine residue undergoes an oxidative deamination to produce ammonia and the pyruvoyl group blocking the N-terminus of the alpha chain.

It catalyses the reaction S-adenosyl-L-methionine + H(+) = S-adenosyl 3-(methylsulfanyl)propylamine + CO2. It functions in the pathway amine and polyamine biosynthesis; S-adenosylmethioninamine biosynthesis; S-adenosylmethioninamine from S-adenosyl-L-methionine: step 1/1. Its function is as follows. Catalyzes the decarboxylation of S-adenosylmethionine to S-adenosylmethioninamine (dcAdoMet), the propylamine donor required for the synthesis of the polyamines spermine and spermidine from the diamine putrescine. The sequence is that of S-adenosylmethionine decarboxylase proenzyme from Thermoplasma volcanium (strain ATCC 51530 / DSM 4299 / JCM 9571 / NBRC 15438 / GSS1).